A 215-amino-acid polypeptide reads, in one-letter code: UPF0502 protein YceH (215 aa).

An N6-acetyllysine modification is found at lysine 80.

Belongs to the UPF0502 family.

The chain is UPF0502 protein YceH from Escherichia coli O45:K1 (strain S88 / ExPEC).